Reading from the N-terminus, the 619-residue chain is Schlafen family member 12-like (619 aa).

The helical transmembrane segment at Ile-598–Leu-618 threads the bilayer.

This sequence belongs to the Schlafen family.

The protein resides in the membrane. The sequence is that of Schlafen family member 12-like (SLFN12L) from Pongo abelii (Sumatran orangutan).